The following is a 204-amino-acid chain: Peptide deformylase (204 aa).

Fe cation is bound by residues cysteine 131 and histidine 174. Residue glutamate 175 is part of the active site. Histidine 178 is a Fe cation binding site.

The protein belongs to the polypeptide deformylase family. Fe(2+) serves as cofactor.

It catalyses the reaction N-terminal N-formyl-L-methionyl-[peptide] + H2O = N-terminal L-methionyl-[peptide] + formate. Functionally, removes the formyl group from the N-terminal Met of newly synthesized proteins. Requires at least a dipeptide for an efficient rate of reaction. N-terminal L-methionine is a prerequisite for activity but the enzyme has broad specificity at other positions. The sequence is that of Peptide deformylase from Streptococcus equi subsp. zooepidemicus (strain H70).